The sequence spans 164 residues: Phosphopantetheine adenylyltransferase (164 aa).

Ser9 is a substrate binding site. Residues 9–10 (SF) and His17 contribute to the ATP site. Substrate is bound by residues Lys41, Leu73, and Lys87. ATP-binding positions include 88-90 (GLR), Glu98, and 123-129 (YSYLSSS).

Belongs to the bacterial CoaD family. As to quaternary structure, homohexamer. The cofactor is Mg(2+).

The protein resides in the cytoplasm. It carries out the reaction (R)-4'-phosphopantetheine + ATP + H(+) = 3'-dephospho-CoA + diphosphate. The protein operates within cofactor biosynthesis; coenzyme A biosynthesis; CoA from (R)-pantothenate: step 4/5. Reversibly transfers an adenylyl group from ATP to 4'-phosphopantetheine, yielding dephospho-CoA (dPCoA) and pyrophosphate. The polypeptide is Phosphopantetheine adenylyltransferase (Clostridium botulinum (strain Okra / Type B1)).